The primary structure comprises 177 residues: RNA pyrophosphohydrolase (177 aa).

Residues 6–149 form the Nudix hydrolase domain; that stretch reads GYRPNVGIVI…KRDVYRRVMK (144 aa). Positions 38–59 match the Nudix box motif; that stretch reads GGINPGESAEQAMYRELFEEVG.

The protein belongs to the Nudix hydrolase family. RppH subfamily. The cofactor is a divalent metal cation.

Accelerates the degradation of transcripts by removing pyrophosphate from the 5'-end of triphosphorylated RNA, leading to a more labile monophosphorylated state that can stimulate subsequent ribonuclease cleavage. The sequence is that of RNA pyrophosphohydrolase from Cronobacter sakazakii (strain ATCC BAA-894) (Enterobacter sakazakii).